Here is a 331-residue protein sequence, read N- to C-terminus: MGSAGLSRLHGLFAVYKPPGLKWKHLRDTVELQLLKGLNARKPPAPKQRVRFLLGPMEGSEEKELTLTATSVPSFINHPLVCGPAFAHLKVGVGHRLDAQASGVLVLGVGHGCRLLTDMYNAHLTKDYTVRGLLGKATDDFREDGRLVEKTTYDHVTREKLDRILAVIQGSHQKALVMYSNLDLKTQEAYEMAVRGLIRPMNKSPMLITGIRCLYFAPPEFLLEVQCMHETQKELRKLVHEIGLELKTTAVCTQVRRTRDGFFTLDSALLRTQWDLTNIQDAIRAATPQVAAELEKSLSPGLDTKQLPSPGWSWDSQGPSSTLGLERGAGQ.

The transit peptide at 1–10 directs the protein to the mitochondrion; the sequence is MGSAGLSRLH. Asp98 (nucleophile) is an active-site residue. Residues 296–331 are disordered; the sequence is KSLSPGLDTKQLPSPGWSWDSQGPSSTLGLERGAGQ. Residues 314 to 323 show a composition bias toward polar residues; sequence WDSQGPSSTL.

This sequence belongs to the pseudouridine synthase TruB family. As to quaternary structure, forms a regulatory protein-RNA complex, consisting of RCC1L, NGRN, RPUSD3, RPUSD4, TRUB2, FASTKD2 and 16S mt-rRNA.

Its subcellular location is the mitochondrion matrix. It carries out the reaction a uridine in mRNA = a pseudouridine in mRNA. The enzyme catalyses uridine(55) in tRNA = pseudouridine(55) in tRNA. Its function is as follows. Minor enzyme contributing to the isomerization of uridine to pseudouridine (pseudouridylation) of specific mitochondrial mRNAs (mt-mRNAs) such as COXI and COXIII mt-mRNAs. As a component of a functional protein-RNA module, consisting of RCC1L, NGRN, RPUSD3, RPUSD4, TRUB2, FASTKD2 and 16S mitochondrial ribosomal RNA (16S mt-rRNA), controls 16S mt-rRNA abundance and is required for intra-mitochondrial translation. Also catalyzes pseudouridylation of some tRNAs, including synthesis of pseudouridine(55) from uracil-55, in the psi GC loop of a subset of tRNAs. The chain is Pseudouridylate synthase TRUB2, mitochondrial from Homo sapiens (Human).